The following is a 275-amino-acid chain: MPRRAREYPEEGELVVATVKRVHNYGAFLDLDEYPGKEGFMHISEVASTWVKNIRDYLREGQKVVAKVIRVDPKKGHIDLSLRRVTQQQRKAKLQEFKRAQKAENLLKLAAEKLGKDFEEAWREVWVPLENEWGEVYAAFEDAARNGIEVLKGYVPDEWLPVLKEIIDSYVEVPTVTIDAEFEITVPKPNGIEIIKEALIKARDRANQEKDIEVKFTYLGAPRYRIDITAPDYYKAEEVLEDIAEEILRVIKEAGGEATLLRKEKRIRKVKKRKK.

In terms of domain architecture, S1 motif spans Gly-12–Arg-83.

The protein belongs to the eIF-2-alpha family. Heterotrimer composed of an alpha, a beta and a gamma chain.

Functionally, eIF-2 functions in the early steps of protein synthesis by forming a ternary complex with GTP and initiator tRNA. This is Translation initiation factor 2 subunit alpha from Pyrococcus furiosus (strain ATCC 43587 / DSM 3638 / JCM 8422 / Vc1).